A 102-amino-acid chain; its full sequence is Small ribosomal subunit protein uS10 (102 aa).

This sequence belongs to the universal ribosomal protein uS10 family. In terms of assembly, part of the 30S ribosomal subunit.

In terms of biological role, involved in the binding of tRNA to the ribosomes. This is Small ribosomal subunit protein uS10 from Lactococcus lactis subsp. lactis (strain IL1403) (Streptococcus lactis).